The chain runs to 34 residues: Brevinin-2Ec (34 aa).

C28 and C34 are oxidised to a cystine.

It belongs to the frog skin active peptide (FSAP) family. Brevinin subfamily. As to expression, expressed by the skin glands.

Its subcellular location is the secreted. Functionally, shows antibacterial activity against representative Gram-negative and Gram-positive bacterial species, and hemolytic activity. The protein is Brevinin-2Ec of Pelophylax lessonae (Pool frog).